The chain runs to 435 residues: Probable exopolygalacturonase B (435 aa).

The N-terminal stretch at 1-15 (MKFFTAALFASAVSA) is a signal peptide. Residues Asn-59, Asn-184, and Asn-224 are each glycosylated (N-linked (GlcNAc...) asparagine). Asp-254 functions as the Proton donor in the catalytic mechanism. A disulfide bridge connects residues Cys-256 and Cys-273. Residues Asn-262 and Asn-274 are each glycosylated (N-linked (GlcNAc...) asparagine). Residue His-277 is part of the active site. Asn-301, Asn-328, Asn-365, and Asn-368 each carry an N-linked (GlcNAc...) asparagine glycan. An intrachain disulfide couples Cys-391 to Cys-397.

It belongs to the glycosyl hydrolase 28 family.

The protein localises to the secreted. The enzyme catalyses [(1-&gt;4)-alpha-D-galacturonosyl](n) + H2O = alpha-D-galacturonate + [(1-&gt;4)-alpha-D-galacturonosyl](n-1). In terms of biological role, specific in hydrolyzing the terminal glycosidic bond of polygalacturonic acid and oligogalacturonates. This Aspergillus terreus (strain NIH 2624 / FGSC A1156) protein is Probable exopolygalacturonase B (pgxB).